Reading from the N-terminus, the 167-residue chain is Shikimate kinase (167 aa).

12-17 provides a ligand contact to ATP; it reads GSGKTT. Thr-16 is a binding site for Mg(2+). Substrate contacts are provided by Asp-34, Arg-58, and Gly-80. An ATP-binding site is contributed by Arg-117. Position 135 (Arg-135) interacts with substrate. Arg-152 contacts ATP.

The protein belongs to the shikimate kinase family. As to quaternary structure, monomer. Mg(2+) is required as a cofactor.

Its subcellular location is the cytoplasm. It catalyses the reaction shikimate + ATP = 3-phosphoshikimate + ADP + H(+). It functions in the pathway metabolic intermediate biosynthesis; chorismate biosynthesis; chorismate from D-erythrose 4-phosphate and phosphoenolpyruvate: step 5/7. Catalyzes the specific phosphorylation of the 3-hydroxyl group of shikimic acid using ATP as a cosubstrate. The polypeptide is Shikimate kinase (Salinispora tropica (strain ATCC BAA-916 / DSM 44818 / JCM 13857 / NBRC 105044 / CNB-440)).